Here is a 386-residue protein sequence, read N- to C-terminus: Cytochrome b (386 aa).

The next 4 helical transmembrane spans lie at 39 to 59 (FGSL…FLAM), 83 to 104 (FMLK…YIHM), 119 to 139 (WNIG…GYVL), and 184 to 204 (FFSL…LHIL). Heme b-binding residues include His89 and His103. 2 residues coordinate heme b: His188 and His202. His207 provides a ligand contact to a ubiquinone. The next 4 membrane-spanning stretches (helical) occupy residues 232 to 252 (YKDL…CYFM), 294 to 314 (LGGV…PFIH), 326 to 346 (LGKI…WLGA), and 353 to 374 (YIMI…LVPL).

The protein belongs to the cytochrome b family. As to quaternary structure, the main subunits of complex b-c1 are: cytochrome b, cytochrome c1 and the Rieske protein. The cofactor is heme b.

The protein localises to the mitochondrion inner membrane. In terms of biological role, component of the ubiquinol-cytochrome c reductase complex (complex III or cytochrome b-c1 complex) that is part of the mitochondrial respiratory chain. The b-c1 complex mediates electron transfer from ubiquinol to cytochrome c. Contributes to the generation of a proton gradient across the mitochondrial membrane that is then used for ATP synthesis. This is Cytochrome b (MT-CYB) from Sarcophyton glaucum (Toadstool umbrella leather coral).